Consider the following 285-residue polypeptide: GPN-loop GTPase 3 (285 aa).

Residue 13-18 (GSGKST) coordinates GTP. Residues 72–74 (GPN) carry the Gly-Pro-Asn (GPN)-loop; involved in dimer interface motif. 174–177 (TKMD) contributes to the GTP binding site. The disordered stretch occupies residues 262-285 (EPKEVDEEPSNSNFDAFFQDTADS).

Belongs to the GPN-loop GTPase family. As to quaternary structure, heterodimer with gpn1. Binds to RNA polymerase II (RNAPII).

Its function is as follows. Small GTPase required for proper localization of RNA polymerase II (RNAPII). May act at an RNAP assembly step prior to nuclear import. The chain is GPN-loop GTPase 3 from Danio rerio (Zebrafish).